We begin with the raw amino-acid sequence, 1216 residues long: Sodium/potassium/calcium exchanger 1 (1216 aa).

At 1-446 (MGKLIRMGAQ…DLFSVEERRQ (446 aa)) the chain is on the extracellular side. The tract at residues 94 to 196 (EATAGRDGTP…KYSPSPLGRM (103 aa)) is disordered. Polar residues-rich tracts occupy residues 110-135 (NTPSTPRGTASITPAIPNNYSPTPTG) and 144-166 (SATPSGVLNHYTQSRPMVNSYTR). 2 N-linked (GlcNAc...) asparagine glycosylation sites follow: Asn290 and Asn303. The helical transmembrane segment at 447–467 (GWVVLHIFGMMYVFVALAIVC) threads the bilayer. Residues 468–491 (DEYFVPALGVITDKLQISEDVAGA) lie on the Cytoplasmic side of the membrane. An Alpha-1 repeat occupies 488-528 (VAGATFMAAGGSAPELFTSLIGVFISHSNVGIGTIVGSAVF). A helical membrane pass occupies residues 492–512 (TFMAAGGSAPELFTSLIGVFI). At 513 to 518 (SHSNVG) the chain is on the extracellular side. Residues 519-539 (IGTIVGSAVFNILFVIGTCAL) form a helical membrane-spanning segment. The Cytoplasmic portion of the chain corresponds to 540–557 (FSREILNLTWWPLFRDIT). The helical transmembrane segment at 558-578 (FYIFDLMMLILFFLDSLIAWW) threads the bilayer. A topological domain (extracellular) is located at residue Glu579. A helical membrane pass occupies residues 580–600 (SVLLLLAYAFYVFTMKWNQQL). Residues 601–1024 (ELWVKEQLNK…SLEWPETRRK (424 aa)) are Cytoplasmic-facing. Ser652 carries the post-translational modification Phosphoserine. Positions 677–1018 (GEARPSKDKE…ENEQPLSLEW (342 aa)) are disordered. A compositionally biased stretch (basic and acidic residues) spans 702-712 (AESKPEEEPAK). Thr717 carries the post-translational modification Phosphothreonine. One copy of the 1; approximate repeat lies at 796–811 (DEDEGEIQAEGGEVKG). The interval 796–928 (DEDEGEIQAE…QAGEAGEVEG (133 aa)) is 8 X 17 AA tandem repeats of D-E-D-E-G-E-I-Q-A-G-E-[GA]-G-E-V-[EK]-G. 6 tandem repeats follow at residues 812-828 (DEDEGEIQAGEGGEVEG), 829-845 (DEDEGEIQAGEGGEVEG), 846-862 (DEDEGEIQAGEAGEVEG), 863-879 (DEDEGEIQAGEGGEVEG), 880-896 (DEDEGEIQAGEAGEVEG), and 897-913 (DEDEGEIQAGEGGEVKG). Composition is skewed to acidic residues over residues 824 to 834 (GEVEGDEDEGE), 841 to 851 (GEVEGDEDEGE), 858 to 868 (GEVEGDEDEGE), 875 to 885 (GEVEGDEDEGE), 892 to 902 (GEVEGDEDEGE), 924 to 941 (GEVEGEDGEVEGGEDEGE), and 981 to 1011 (GDSEDEEEEDEEEEDEEEEEEEEEEEEEENE). An 8; approximate repeat occupies 914–928 (DEGEIQAGEAGEVEG). Residues 1025 to 1045 (QAIYLFLLPIVFPLWLTVPDV) form a helical membrane-spanning segment. Over 1046–1052 (RRLEAKK) the chain is Extracellular. A helical transmembrane segment spans residues 1053-1073 (FFVITFLGSILWIAMFSYLMV). Over 1074–1088 (WWAHQVGETIGISEE) the chain is Cytoplasmic. Residues 1089-1109 (IMGLTILAAGTSIPDLITSVI) form a helical membrane-spanning segment. The Alpha-2 repeat unit spans residues 1096-1127 (AAGTSIPDLITSVIVARKGLGDMAVSSSVGSN). Topologically, residues 1110–1127 (VARKGLGDMAVSSSVGSN) are extracellular. A helical transmembrane segment spans residues 1128–1148 (IFDITVGLPLPWMLFSLINGL). Topologically, residues 1149-1157 (QPVAVSSNG) are cytoplasmic. The helical transmembrane segment at 1158 to 1178 (LFCAIVLLFLMLLFVISSIAL) threads the bilayer. The Extracellular segment spans residues 1179–1185 (CKWRMNK). The chain crosses the membrane as a helical span at residues 1186 to 1206 (ILGFTMFLLYFVFLIISVMLE). The Cytoplasmic segment spans residues 1207–1216 (DRIISCPVSV).

The protein belongs to the Ca(2+):cation antiporter (CaCA) (TC 2.A.19) family. SLC24A subfamily. In terms of processing, the uncleaved signal sequence is required for efficient membrane targeting and proper membrane integration and topology. Post-translationally, glycosylated. In terms of tissue distribution, retina.

The protein resides in the cell membrane. It carries out the reaction Ca(2+)(out) + K(+)(out) + 4 Na(+)(in) = Ca(2+)(in) + K(+)(in) + 4 Na(+)(out). In terms of biological role, calcium, potassium:sodium antiporter that transports 1 Ca(2+) and 1 K(+) in exchange for 4 Na(+). Critical component of the visual transduction cascade, controlling the calcium concentration of outer segments during light and darkness. Light causes a rapid lowering of cytosolic free calcium in the outer segment of both retinal rod and cone photoreceptors and the light-induced lowering of calcium is caused by extrusion via this protein which plays a key role in the process of light adaptation. This Bos taurus (Bovine) protein is Sodium/potassium/calcium exchanger 1 (SLC24A1).